The primary structure comprises 747 residues: Sex-specific storage-protein 1 (747 aa).

The first 15 residues, 1-15 (MRVLVLLACLAAASA), serve as a signal peptide directing secretion. N-linked (GlcNAc...) asparagine glycans are attached at residues Asn-494 and Asn-706.

This sequence belongs to the hemocyanin family. In terms of tissue distribution, fat body.

It localises to the secreted. The protein resides in the extracellular space. Larval storage protein (LSP) which may serve as a store of amino acids for synthesis of adult proteins. The polypeptide is Sex-specific storage-protein 1 (SP1) (Bombyx mori (Silk moth)).